The chain runs to 284 residues: Bifunctional protein FolD (284 aa).

Residues 166–168 and I232 contribute to the NADP(+) site; that span reads GSS.

Belongs to the tetrahydrofolate dehydrogenase/cyclohydrolase family. Homodimer.

The catalysed reaction is (6R)-5,10-methylene-5,6,7,8-tetrahydrofolate + NADP(+) = (6R)-5,10-methenyltetrahydrofolate + NADPH. It catalyses the reaction (6R)-5,10-methenyltetrahydrofolate + H2O = (6R)-10-formyltetrahydrofolate + H(+). It participates in one-carbon metabolism; tetrahydrofolate interconversion. In terms of biological role, catalyzes the oxidation of 5,10-methylenetetrahydrofolate to 5,10-methenyltetrahydrofolate and then the hydrolysis of 5,10-methenyltetrahydrofolate to 10-formyltetrahydrofolate. This chain is Bifunctional protein FolD, found in Buchnera aphidicola subsp. Cinara cedri (strain Cc).